The chain runs to 37 residues: Large ribosomal subunit protein bL36 (37 aa).

This sequence belongs to the bacterial ribosomal protein bL36 family.

This chain is Large ribosomal subunit protein bL36, found in Borreliella afzelii (strain PKo) (Borrelia afzelii).